We begin with the raw amino-acid sequence, 423 residues long: Probable efflux pump mfs2 (423 aa).

Transmembrane regions (helical) follow at residues Thr21 to Val41, Ser49 to His69, Leu79 to Val99, Leu111 to Val131, Trp138 to His158, Ala220 to Leu240, Tyr256 to Tyr278, Ile295 to Ala315, His319 to Phe339, Ala360 to Leu380, and Leu392 to Trp411.

Belongs to the major facilitator superfamily.

The protein resides in the membrane. Functionally, probable efflux pump; part of the gene cluster 27 that mediates the biosynthesis of asparasone A, a sclerotium-specific anthraquinone pigment important for sclerotial survival. The chain is Probable efflux pump mfs2 from Aspergillus flavus (strain ATCC 200026 / FGSC A1120 / IAM 13836 / NRRL 3357 / JCM 12722 / SRRC 167).